The following is a 493-amino-acid chain: Transcript termination protein A18 (493 aa).

A Helicase ATP-binding domain is found at 100–256 (MIELKRPLYI…NSIINIAKLS (157 aa)). 113–120 (LACGFGKT) contacts ATP. The DESH box signature appears at 206–209 (DESH).

It belongs to the helicase family. Poxviruses subfamily. Interacts with G2. Might be part of a transcription complex composed at least of G2, A18, and H5.

Its subcellular location is the virion. DNA helicase which seems to act as a postreplicative transcription termination factor. Involved in ATP-dependent release of nascent RNA. Forms a stable complex with single-stranded DNA, and to a lesser extent RNA. The polypeptide is Transcript termination protein A18 (Camelus).